The following is a 602-amino-acid chain: Multiple epidermal growth factor-like domains protein 9 (602 aa).

The first 30 residues, 1 to 30, serve as a signal peptide directing secretion; it reads MNGGAERAMRSLPSLGGLALLCCAAAAAAA. The Extracellular portion of the chain corresponds to 31-514; the sequence is AVASAASAGN…LADVSWTQFN (484 aa). The interval 38-199 is disordered; it reads AGNVTGGGGA…PATEAPSSPP (162 aa). A glycan (N-linked (GlcNAc...) asparagine) is linked at N40. Low complexity-rich tracts occupy residues 68–85 and 139–166; these read PRAT…PPRA and APTR…TVPA. Residues 167–176 show a composition bias toward pro residues; it reads PTTPRTPTPD. The N-linked (GlcNAc...) asparagine glycan is linked to N182. Positions 187–199 are enriched in pro residues; sequence PTPPATEAPSSPP. Intrachain disulfides connect C204–C217, C206–C224, C226–C235, C238–C251, C254–C266, C256–C272, C274–C283, C286–C298, C301–C310, C303–C317, C320–C329, C332–C346, C349–C360, C351–C371, C374–C383, C386–C397, C400–C415, C402–C422, C425–C434, and C437–C449. Laminin EGF-like domains follow at residues 204 to 253, 254 to 300, 301 to 348, 349 to 399, and 400 to 451; these read CNCS…LCQP, CDCS…GCLP, CQCN…ECLR, CPCS…ICRK, and CQCH…NCIK. N-linked (GlcNAc...) asparagine glycosylation is found at N205 and N218. N-linked (GlcNAc...) asparagine glycosylation occurs at N245. Residue N267 is glycosylated (N-linked (GlcNAc...) asparagine). An N-linked (GlcNAc...) asparagine glycan is attached at N305. Residue N428 is glycosylated (N-linked (GlcNAc...) asparagine). 3 N-linked (GlcNAc...) asparagine glycosylation sites follow: N468, N481, and N500. A helical membrane pass occupies residues 515–535; the sequence is IIILTVIIIVVVLLMGFVGAV. Topologically, residues 536 to 602 are cytoplasmic; the sequence is YMYREYQNRK…LTTPIHNYKA (67 aa).

It is found in the membrane. The sequence is that of Multiple epidermal growth factor-like domains protein 9 (MEGF9) from Homo sapiens (Human).